Reading from the N-terminus, the 577-residue chain is Copine-8 (577 aa).

C2 domains follow at residues T19 to K146 and K155 to Y278. Residues D52, D58, D112, D114, S117, K122, D124, D186, D192, D248, D250, and D256 each contribute to the Ca(2+) site. Residue S273 is modified to Phosphoserine. The 202-residue stretch at N322–I523 folds into the VWFA domain.

This sequence belongs to the copine family. Ca(2+) is required as a cofactor.

Probable calcium-dependent phospholipid-binding protein that may play a role in calcium-mediated intracellular processes. The polypeptide is Copine-8 (Mus musculus (Mouse)).